Here is a 306-residue protein sequence, read N- to C-terminus: tRNA dimethylallyltransferase (306 aa).

Residue 11 to 18 (APTAAGKT) coordinates ATP. A substrate-binding site is contributed by 13–18 (TAAGKT).

This sequence belongs to the IPP transferase family. Monomer. Mg(2+) is required as a cofactor.

The enzyme catalyses adenosine(37) in tRNA + dimethylallyl diphosphate = N(6)-dimethylallyladenosine(37) in tRNA + diphosphate. Its function is as follows. Catalyzes the transfer of a dimethylallyl group onto the adenine at position 37 in tRNAs that read codons beginning with uridine, leading to the formation of N6-(dimethylallyl)adenosine (i(6)A). The protein is tRNA dimethylallyltransferase of Deinococcus radiodurans (strain ATCC 13939 / DSM 20539 / JCM 16871 / CCUG 27074 / LMG 4051 / NBRC 15346 / NCIMB 9279 / VKM B-1422 / R1).